A 668-amino-acid polypeptide reads, in one-letter code: UvrABC system protein B (668 aa).

Positions 36 to 276 constitute a Helicase ATP-binding domain; sequence DNIKGGEKAQ…EEAIKNIMEE (241 aa). Residue 49-56 coordinates ATP; it reads GATGTGKT. The Beta-hairpin signature appears at 102–125; the sequence is YYDYYQPEAYVPSSDTYIEKDSSV. A Helicase C-terminal domain is found at 440–606; it reads QMDDLLGEIN…TIKKEIRDLI (167 aa). The UVR domain occupies 632-667; sequence QEAIKKLQKQMHEAAELLDFELAAQIRDMVLELKSM.

It belongs to the UvrB family. Forms a heterotetramer with UvrA during the search for lesions. Interacts with UvrC in an incision complex.

The protein localises to the cytoplasm. In terms of biological role, the UvrABC repair system catalyzes the recognition and processing of DNA lesions. A damage recognition complex composed of 2 UvrA and 2 UvrB subunits scans DNA for abnormalities. Upon binding of the UvrA(2)B(2) complex to a putative damaged site, the DNA wraps around one UvrB monomer. DNA wrap is dependent on ATP binding by UvrB and probably causes local melting of the DNA helix, facilitating insertion of UvrB beta-hairpin between the DNA strands. Then UvrB probes one DNA strand for the presence of a lesion. If a lesion is found the UvrA subunits dissociate and the UvrB-DNA preincision complex is formed. This complex is subsequently bound by UvrC and the second UvrB is released. If no lesion is found, the DNA wraps around the other UvrB subunit that will check the other stand for damage. This chain is UvrABC system protein B, found in Streptococcus thermophilus (strain ATCC BAA-491 / LMD-9).